Here is a 594-residue protein sequence, read N- to C-terminus: E3 ubiquitin-protein ligase TRAF7 (594 aa).

Positions Met1 to Leu33 are disordered. Phosphoserine is present on residues Ser12 and Ser15. Residues Ser15–Ser29 are compositionally biased toward low complexity. The RING-type zinc-finger motif lies at Cys55 to Asn89. The TRAF-type zinc finger occupies His146–Gln216. WD repeat units follow at residues Gly318 to Lys357, Gly361 to Thr398, Ala401 to Lys437, Glu439 to Val478, Thr481 to Thr518, Gly521 to Thr562, and Arg565 to Thr593.

It belongs to the WD repeat TRAF7 family. Homodimer. Interacts with MAP3K3 and promotes the kinase activity of this enzyme. Phosphorylated by MAP3K3. In terms of processing, ubiquitinates itself upon phosphorylation. Ubiquitously expressed. Expression is relatively high in heart, liver, kidney, testis, prostate, thyroid, and salivary gland.

It is found in the cytoplasmic vesicle. The protein resides in the cytoplasm. Its subcellular location is the nucleus. It carries out the reaction S-ubiquitinyl-[E2 ubiquitin-conjugating enzyme]-L-cysteine + [acceptor protein]-L-lysine = [E2 ubiquitin-conjugating enzyme]-L-cysteine + N(6)-ubiquitinyl-[acceptor protein]-L-lysine.. It participates in protein modification; protein ubiquitination. In terms of biological role, E3 ubiquitin and SUMO-protein ligase that plays a role in different biological processes such as innate immunity, inflammation or apoptosis. Potentiates MAP3K3-mediated activation of the NF-kappa-B, JUN/AP1 and DDIT3 transcriptional regulators. Negatively regulates MYB transcriptional activity by sequestering it to the cytosol via SUMOylation. Plays a role in the phosphorylation of MAPK1 and/or MAPK3, probably via its interaction with MAP3K3. Negatively regulates RLR-mediated innate immunity by promoting 'Lys-48'-linked ubiquitination of TBK1 through its RING domain to inhibit the cellular antiviral response. Promotes 'Lys-29'-linked polyubiquitination of NEMO/IKBKG and RELA leading to targeting these two proteins to lysosomal degradative pathways, reducing the transcriptional activity of NF-kappa-B. This chain is E3 ubiquitin-protein ligase TRAF7, found in Mus musculus (Mouse).